Consider the following 175-residue polypeptide: MADEELQPVPAAEAAIVPSGPTSQWLTENGFAHESLAADKNGVEIIKVEADFLLPIATALYAYGFNYLQFQGGVDLGPGQDLVSVYHLVKVSDNADKPEEIRVKVFLPRENPVVPSVYWIWKTADWQERESYDMFGIIYEGHPNLKRILMPEDWVGWPLRKDYISPDFYELQDAY.

It belongs to the complex I 30 kDa subunit family. As to quaternary structure, NDH-1 can be composed of about 15 different subunits; different subcomplexes with different compositions have been identified which probably have different functions.

The protein localises to the cellular thylakoid membrane. It carries out the reaction a plastoquinone + NADH + (n+1) H(+)(in) = a plastoquinol + NAD(+) + n H(+)(out). The catalysed reaction is a plastoquinone + NADPH + (n+1) H(+)(in) = a plastoquinol + NADP(+) + n H(+)(out). NDH-1 shuttles electrons from an unknown electron donor, via FMN and iron-sulfur (Fe-S) centers, to quinones in the respiratory and/or the photosynthetic chain. The immediate electron acceptor for the enzyme in this species is believed to be plastoquinone. Couples the redox reaction to proton translocation, and thus conserves the redox energy in a proton gradient. Cyanobacterial NDH-1 also plays a role in inorganic carbon-concentration. The protein is NAD(P)H-quinone oxidoreductase subunit J of Nostoc sp. (strain PCC 7120 / SAG 25.82 / UTEX 2576).